The following is a 419-amino-acid chain: Tol-Pal system protein TolB (419 aa).

Residues 1-19 (MFNRIISLFLLLFTGQVIA) form the signal peptide.

It belongs to the TolB family. As to quaternary structure, the Tol-Pal system is composed of five core proteins: the inner membrane proteins TolA, TolQ and TolR, the periplasmic protein TolB and the outer membrane protein Pal. They form a network linking the inner and outer membranes and the peptidoglycan layer.

The protein localises to the periplasm. Part of the Tol-Pal system, which plays a role in outer membrane invagination during cell division and is important for maintaining outer membrane integrity. The sequence is that of Tol-Pal system protein TolB from Legionella pneumophila (strain Corby).